Here is a 210-residue protein sequence, read N- to C-terminus: Uracil phosphoribosyltransferase (210 aa).

5-phospho-alpha-D-ribose 1-diphosphate is bound by residues R77, R102, and D129 to S137. Residues I195 and G200 to A202 each bind uracil. D201 provides a ligand contact to 5-phospho-alpha-D-ribose 1-diphosphate.

It belongs to the UPRTase family. Requires Mg(2+) as cofactor.

The catalysed reaction is UMP + diphosphate = 5-phospho-alpha-D-ribose 1-diphosphate + uracil. The protein operates within pyrimidine metabolism; UMP biosynthesis via salvage pathway; UMP from uracil: step 1/1. Allosterically activated by GTP. Functionally, catalyzes the conversion of uracil and 5-phospho-alpha-D-ribose 1-diphosphate (PRPP) to UMP and diphosphate. The protein is Uracil phosphoribosyltransferase of Mycoplasmoides gallisepticum (strain R(low / passage 15 / clone 2)) (Mycoplasma gallisepticum).